The chain runs to 77 residues: ATP synthase subunit c (77 aa).

2 helical membrane passes run 7–27 (AFKYLAASIAAGLAALAAALG) and 57–77 (VGLIEAVPILAIVVAFLILFL).

This sequence belongs to the ATPase C chain family. In terms of assembly, F-type ATPases have 2 components, F(1) - the catalytic core - and F(0) - the membrane proton channel. F(1) has five subunits: alpha(3), beta(3), gamma(1), delta(1), epsilon(1). F(0) has three main subunits: a(1), b(2) and c(10-14). The alpha and beta chains form an alternating ring which encloses part of the gamma chain. F(1) is attached to F(0) by a central stalk formed by the gamma and epsilon chains, while a peripheral stalk is formed by the delta and b chains.

Its subcellular location is the cell membrane. F(1)F(0) ATP synthase produces ATP from ADP in the presence of a proton or sodium gradient. F-type ATPases consist of two structural domains, F(1) containing the extramembraneous catalytic core and F(0) containing the membrane proton channel, linked together by a central stalk and a peripheral stalk. During catalysis, ATP synthesis in the catalytic domain of F(1) is coupled via a rotary mechanism of the central stalk subunits to proton translocation. Its function is as follows. Key component of the F(0) channel; it plays a direct role in translocation across the membrane. A homomeric c-ring of between 10-14 subunits forms the central stalk rotor element with the F(1) delta and epsilon subunits. The chain is ATP synthase subunit c from Lactobacillus helveticus (strain DPC 4571).